The following is a 681-amino-acid chain: PTS system glucose-specific EIICBA component (681 aa).

Residues 3 to 414 (KKLFGQLQRI…LKYKTPGRED (412 aa)) enclose the PTS EIIC type-1 domain. The next 10 membrane-spanning stretches (helical) occupy residues 16-36 (LMLP…GTAM), 73-93 (MIFA…AAIA), 126-146 (ILGI…GALA), 170-190 (FVPI…ALIW), 199-219 (AFST…FGFI), 273-293 (FMQG…LAIY), 303-323 (VVAG…ITEP), 328-348 (FLFV…LSFL), 355-375 (LHLG…GILP), and 383-403 (VIPV…FLIV). The 82-residue stretch at 425–506 (TELPYAVLEA…QQIMNGQVVE (82 aa)) folds into the PTS EIIB type-1 domain. Cysteine 447 (phosphocysteine intermediate; for EIIB activity) is an active-site residue. Positions 551 to 655 (DQVFSEKMMG…SDITPIIVTQ (105 aa)) constitute a PTS EIIA type-1 domain. The Tele-phosphohistidine intermediate; for EIIA activity role is filled by histidine 603.

Its subcellular location is the cell membrane. The enzyme catalyses N(pros)-phospho-L-histidyl-[protein] + D-glucose(out) = D-glucose 6-phosphate(in) + L-histidyl-[protein]. Functionally, the phosphoenolpyruvate-dependent sugar phosphotransferase system (sugar PTS), a major carbohydrate active transport system, catalyzes the phosphorylation of incoming sugar substrates concomitantly with their translocation across the cell membrane. This system is involved in glucose transport. The sequence is that of PTS system glucose-specific EIICBA component (ptsG) from Staphylococcus aureus (strain NCTC 8325 / PS 47).